Consider the following 156-residue polypeptide: Protein-export protein SecB (156 aa).

This sequence belongs to the SecB family. Homotetramer, a dimer of dimers. One homotetramer interacts with 1 SecA dimer.

The protein localises to the cytoplasm. In terms of biological role, one of the proteins required for the normal export of preproteins out of the cell cytoplasm. It is a molecular chaperone that binds to a subset of precursor proteins, maintaining them in a translocation-competent state. It also specifically binds to its receptor SecA. This Paraburkholderia xenovorans (strain LB400) protein is Protein-export protein SecB.